Here is a 154-residue protein sequence, read N- to C-terminus: Ribonuclease H (154 aa).

In terms of domain architecture, RNase H type-1 spans 1–142 (MKQVDIFTDG…CDTIARGHAS (142 aa)). Mg(2+) contacts are provided by D9, E47, D69, and D134.

The protein belongs to the RNase H family. Monomer. It depends on Mg(2+) as a cofactor.

The protein localises to the cytoplasm. It carries out the reaction Endonucleolytic cleavage to 5'-phosphomonoester.. Its function is as follows. Endonuclease that specifically degrades the RNA of RNA-DNA hybrids. The protein is Ribonuclease H of Oleidesulfovibrio alaskensis (strain ATCC BAA-1058 / DSM 17464 / G20) (Desulfovibrio alaskensis).